The chain runs to 520 residues: Transactivator/viroplasmin protein (520 aa).

The interval 487 to 520 (QNASADSGPKDGPPPTRSIVEKEDVPTTSSKQVD) is disordered.

The protein belongs to the caulimoviridae viroplasmin family.

The protein localises to the host cytoplasm. Its function is as follows. Enhances the ribosomal termination-reinitiation event leading to the translation of major open reading frames on the polycistronic viral RNAs. This chain is Transactivator/viroplasmin protein, found in Arabidopsis thaliana (Mouse-ear cress).